The sequence spans 182 residues: ATP-dependent protease subunit HslV (182 aa).

Residue Thr-7 is part of the active site. Na(+) is bound by residues Gly-162, Cys-165, and Thr-168.

The protein belongs to the peptidase T1B family. HslV subfamily. In terms of assembly, a double ring-shaped homohexamer of HslV is capped on each side by a ring-shaped HslU homohexamer. The assembly of the HslU/HslV complex is dependent on binding of ATP.

Its subcellular location is the cytoplasm. The enzyme catalyses ATP-dependent cleavage of peptide bonds with broad specificity.. Allosterically activated by HslU binding. Functionally, protease subunit of a proteasome-like degradation complex believed to be a general protein degrading machinery. The protein is ATP-dependent protease subunit HslV of Legionella pneumophila (strain Lens).